We begin with the raw amino-acid sequence, 351 residues long: Protein RecA (351 aa).

Residue 67-74 participates in ATP binding; sequence GPESSGKT.

Belongs to the RecA family.

Its subcellular location is the cytoplasm. Its function is as follows. Can catalyze the hydrolysis of ATP in the presence of single-stranded DNA, the ATP-dependent uptake of single-stranded DNA by duplex DNA, and the ATP-dependent hybridization of homologous single-stranded DNAs. It interacts with LexA causing its activation and leading to its autocatalytic cleavage. The polypeptide is Protein RecA (Arthrobacter sp. (strain FB24)).